Consider the following 333-residue polypeptide: Eukaryotic translation initiation factor 2 subunit 2 (333 aa).

Disordered regions lie at residues 1–120 (MSGD…LDIM) and 139–165 (ILEK…QTGP). At Ser-2 the chain carries N-acetylserine. Ser-2 is subject to Phosphoserine. At Ser-13 the chain carries Phosphoserine; by PKC; in vitro. A compositionally biased stretch (basic residues) spans 13-22 (SKKKKKKKKP). A Phosphothreonine modification is found at Thr-36. The span at 40–51 (ETKEVEPEPTED) shows a compositional bias: basic and acidic residues. A Phosphoserine; by CK2 modification is found at Ser-67. The segment covering 96–105 (EGVKDLKIEN) has biased composition (basic and acidic residues). Lys-102 is covalently cross-linked (Glycyl lysine isopeptide (Lys-Gly) (interchain with G-Cter in SUMO2)). 2 stretches are compositionally biased toward acidic residues: residues 106 to 118 (DVQE…DDLD) and 139 to 149 (ILEKDEALEDE). Ser-158 carries the phosphoserine modification. Ser-218 is subject to Phosphoserine; by PKA; in vitro. Residues Lys-265 and Lys-293 each carry the N6-acetyllysine modification. The C4-type zinc-finger motif lies at 281–305 (CHTCRSPDTILQKDTRLYFLQCETC).

The protein belongs to the eIF-2-beta/eIF-5 family. Eukaryotic translation initiation factor 2 eIF2 is a heterotrimeric complex composed of an alpha (EIF2S1), a beta (EIF2S2) and a gamma (EIF2S3) chain. eIF2 is member of the 43S pre-initiation complex (43S PIC). eIF2 forms a complex with at least CELF1/CUGBP1, CALR, CALR3, EIF2S1, EIF2S2, HSP90B1 and HSPA5. Interacts with BZW2/5MP1. Interacts with EIF5. The N-terminus is blocked.

It is found in the cytoplasm. The protein localises to the cytosol. Its function is as follows. Component of the eIF2 complex that functions in the early steps of protein synthesis by forming a ternary complex with GTP and initiator tRNA. This complex binds to a 40S ribosomal subunit, followed by mRNA binding to form the 43S pre-initiation complex (43S PIC). Junction of the 60S ribosomal subunit to form the 80S initiation complex is preceded by hydrolysis of the GTP bound to eIF2 and release of an eIF2-GDP binary complex. In order for eIF2 to recycle and catalyze another round of initiation, the GDP bound to eIF2 must exchange with GTP by way of a reaction catalyzed by eIF2B. This Oryctolagus cuniculus (Rabbit) protein is Eukaryotic translation initiation factor 2 subunit 2 (EIF2S2).